Reading from the N-terminus, the 92-residue chain is Small ribosomal subunit protein uS19 (92 aa).

This sequence belongs to the universal ribosomal protein uS19 family.

Protein S19 forms a complex with S13 that binds strongly to the 16S ribosomal RNA. The chain is Small ribosomal subunit protein uS19 from Sinorhizobium medicae (strain WSM419) (Ensifer medicae).